The chain runs to 160 residues: Ureidoglycolate lyase (160 aa).

This sequence belongs to the ureidoglycolate lyase family. Homodimer. It depends on Ni(2+) as a cofactor.

It catalyses the reaction (S)-ureidoglycolate = urea + glyoxylate. It participates in nitrogen metabolism; (S)-allantoin degradation. In terms of biological role, catalyzes the catabolism of the allantoin degradation intermediate (S)-ureidoglycolate, generating urea and glyoxylate. Involved in the anaerobic utilization of allantoin as sole nitrogen source. Reinforces the induction of genes involved in the degradation of allantoin and glyoxylate by producing glyoxylate. The protein is Ureidoglycolate lyase of Escherichia coli O139:H28 (strain E24377A / ETEC).